A 366-amino-acid chain; its full sequence is Peroxisomal (S)-2-hydroxy-acid oxidase GLO4 (366 aa).

Residues methionine 1 to aspartate 360 enclose the FMN hydroxy acid dehydrogenase domain. Tyrosine 27 is a binding site for a 2-oxocarboxylate. FMN contacts are provided by residues proline 80–glycine 82, serine 109, glutamine 130–tyrosine 132, and threonine 158. Tyrosine 132 provides a ligand contact to a 2-oxocarboxylate. Residue arginine 167 coordinates a 2-oxocarboxylate. Positions 231 and 253 each coordinate FMN. Histidine 255 functions as the Proton acceptor in the catalytic mechanism. Arginine 258 lines the a 2-oxocarboxylate pocket. Residues aspartate 286–arginine 290 and residue 309–residue 310 contribute to the FMN site. A Microbody targeting signal motif is present at residues serine 364–leucine 366.

The protein belongs to the FMN-dependent alpha-hydroxy acid dehydrogenase family. Homotetramer. FMN is required as a cofactor.

The protein resides in the peroxisome. The enzyme catalyses a (2S)-2-hydroxycarboxylate + O2 = a 2-oxocarboxylate + H2O2. The protein operates within lipid metabolism; fatty acid metabolism. Its function is as follows. Oxidase that catalyzes the oxidation of a broad range of 2-hydroxyacids to the corresponding 2-oxoacids, with a reduction of O2 to H2O2. May be involved in a general medium- and long-chain fatty acid catabolic pathway such as alpha-oxidation. The chain is Peroxisomal (S)-2-hydroxy-acid oxidase GLO4 (GLO4) from Oryza sativa subsp. indica (Rice).